A 324-amino-acid polypeptide reads, in one-letter code: Heparan sulfate 2-O-sulfotransferase hst-2 (324 aa).

Residues 1 to 6 (MLWKKR) lie on the Cytoplasmic side of the membrane. The helical; Signal-anchor for type II membrane protein transmembrane segment at 7-24 (KVLYFAGISVFILILLLL) threads the bilayer. Topologically, residues 25–324 (KLNSKPKANV…QYHFEKIKPS (300 aa)) are lumenal. N-linked (GlcNAc...) asparagine glycans are attached at residues N75 and N94. Residues H107 and H109 contribute to the active site. A glycan (N-linked (GlcNAc...) asparagine) is linked at N161. 2 cysteine pairs are disulfide-bonded: C167–C175 and C188–C194.

It belongs to the sulfotransferase 3 family. Homotrimer. Present in the hypodermis, muscle, distal tip cells (DTCs) and in neurons (at protein level).

The protein resides in the golgi apparatus membrane. Functionally, catalyzes the transfer of sulfate to the C2-position of selected hexuronic acid residues within the maturing heparan sulfate (HS). Involved in cell adhesion and guidance by specifically modifying proteoglycans in the extracellular matrix and on the cell surface that are essential for axon migrations. In Caenorhabditis elegans, this protein is Heparan sulfate 2-O-sulfotransferase hst-2.